A 437-amino-acid polypeptide reads, in one-letter code: Probable indole-3-pyruvate monooxygenase YUCCA3 (437 aa).

41-46 (GAGPSG) contacts FAD. Residue 212–217 (GCGNSG) participates in NADP(+) binding.

It belongs to the FMO family. It depends on FAD as a cofactor.

The catalysed reaction is indole-3-pyruvate + NADPH + O2 + H(+) = (indol-3-yl)acetate + CO2 + NADP(+) + H2O. Its pathway is plant hormone metabolism; auxin biosynthesis. Involved in auxin biosynthesis. Belongs to the set of redundant YUCCA genes probably responsible for auxin biosynthesis in roots. This Arabidopsis thaliana (Mouse-ear cress) protein is Probable indole-3-pyruvate monooxygenase YUCCA3 (YUC3).